We begin with the raw amino-acid sequence, 137 residues long: Large ribosomal subunit protein uL16 (137 aa).

The protein belongs to the universal ribosomal protein uL16 family. In terms of assembly, part of the 50S ribosomal subunit.

Functionally, binds 23S rRNA and is also seen to make contacts with the A and possibly P site tRNAs. The sequence is that of Large ribosomal subunit protein uL16 from Maricaulis maris (strain MCS10) (Caulobacter maris).